A 186-amino-acid polypeptide reads, in one-letter code: uncharacterized protein (186 aa).

Residues 121–146 (TSPLLKKNKPSSDQDDTSKQSFDQDE) are disordered.

It belongs to the chlamydial CPn_0422/CT_273/TC_0545 family.

This is an uncharacterized protein from Chlamydia muridarum (strain MoPn / Nigg).